The chain runs to 132 residues: C-X-C motif chemokine 5 (132 aa).

The N-terminal stretch at 1–40 (MSLQLRSSARIPSGSISPFMRMAPLAFLLLFTLPQHLAEA) is a signal peptide. 2 disulfide bridges follow: C53–C79 and C55–C95.

Belongs to the intercrine alpha (chemokine CxC) family. As to quaternary structure, monomer. Homodimer. Post-translationally, GCP-2(1-78) and GCP-2(9-78) are produced by proteolytic cleavage after secretion from fibroblasts and epithelial cells. GCP-2(9-78) is the most prominent form. A number of additional N-terminal (processed between pos. 41 and 48) and C-terminal (processed between pos. 118 and 132) processed forms have been identified, probably also representing intermediate states.

The protein localises to the secreted. May participate in the recruitment of inflammatory cells by injured or infected tissue. GCP-2(1-78) and, more potent, GCP-2(9-78) attract neutrophils and are involved in neutrophil activation. In Mus musculus (Mouse), this protein is C-X-C motif chemokine 5 (Cxcl5).